We begin with the raw amino-acid sequence, 186 residues long: Ribosome-recycling factor (186 aa).

The protein belongs to the RRF family.

It localises to the cytoplasm. Responsible for the release of ribosomes from messenger RNA at the termination of protein biosynthesis. May increase the efficiency of translation by recycling ribosomes from one round of translation to another. The polypeptide is Ribosome-recycling factor (Azorhizobium caulinodans (strain ATCC 43989 / DSM 5975 / JCM 20966 / LMG 6465 / NBRC 14845 / NCIMB 13405 / ORS 571)).